The primary structure comprises 383 residues: MTASSPSLSPTLELACELIRRPSVTPLDADCQALMMRRLEAAGFALEPMRIEEVDNFWARRGGDGPVLCFAGHTDVVPTGPLQAWQHQPFDALIDDQGMLCGRGAADMKGSLASMIVAVERFVADHPKHKGAIAFLITSDEEGPAHHGTKAVVERLAARGERLDWCIVGEPSSTSLVGDVVKNGRRGSLGAKLTIRGVQGHVAYPHLAKNPIHLAAPALAELAAEHWDDGNAFFPPTSFQVSNLNSGTGATNVIPGELTALFNFRFSTESTVEGLQKRVEAILDKHGLDWHVEWALSGLPFLTEPGELLDAVAASIRAVTGREARPSTSGGTSDGRFIATMGTQVVELGPVNATIHQVNERVLASDLELLTEIYYQTLVRLLA.

A Zn(2+)-binding site is contributed by histidine 73. Aspartate 75 is a catalytic residue. Aspartate 107 contacts Zn(2+). Catalysis depends on glutamate 141, which acts as the Proton acceptor. Glutamate 142, glutamate 170, and histidine 356 together coordinate Zn(2+).

Belongs to the peptidase M20A family. DapE subfamily. In terms of assembly, homodimer. It depends on Zn(2+) as a cofactor. Co(2+) serves as cofactor.

It carries out the reaction N-succinyl-(2S,6S)-2,6-diaminopimelate + H2O = (2S,6S)-2,6-diaminopimelate + succinate. Its pathway is amino-acid biosynthesis; L-lysine biosynthesis via DAP pathway; LL-2,6-diaminopimelate from (S)-tetrahydrodipicolinate (succinylase route): step 3/3. In terms of biological role, catalyzes the hydrolysis of N-succinyl-L,L-diaminopimelic acid (SDAP), forming succinate and LL-2,6-diaminopimelate (DAP), an intermediate involved in the bacterial biosynthesis of lysine and meso-diaminopimelic acid, an essential component of bacterial cell walls. The sequence is that of Succinyl-diaminopimelate desuccinylase from Pseudomonas aeruginosa (strain UCBPP-PA14).